The sequence spans 244 residues: Protein crossbronx (244 aa).

Residues 20-176 (QQEYKILAEY…VQENIKESKE (157 aa)) form the UBC core domain. The segment at 209–244 (AGRSKQTEPSAQQGNGGHATGLSWVKEGEFKPLSIE) is disordered.

Belongs to the ubiquitin-conjugating enzyme family. FTS subfamily.

This Drosophila sechellia (Fruit fly) protein is Protein crossbronx (cbx).